Consider the following 324-residue polypeptide: Elongation factor P--(R)-beta-lysine ligase (324 aa).

Position 75–77 (75–77) interacts with substrate; that stretch reads SPE. Residues 99 to 101 and asparagine 108 contribute to the ATP site; that span reads RNE. Tyrosine 117 is a substrate binding site. 243 to 244 is a binding site for ATP; it reads EL. Substrate is bound at residue glutamate 250. Residue glycine 299 participates in ATP binding.

It belongs to the class-II aminoacyl-tRNA synthetase family. EpmA subfamily. As to quaternary structure, homodimer.

The enzyme catalyses D-beta-lysine + L-lysyl-[protein] + ATP = N(6)-((3R)-3,6-diaminohexanoyl)-L-lysyl-[protein] + AMP + diphosphate + H(+). In terms of biological role, with EpmB is involved in the beta-lysylation step of the post-translational modification of translation elongation factor P (EF-P). Catalyzes the ATP-dependent activation of (R)-beta-lysine produced by EpmB, forming a lysyl-adenylate, from which the beta-lysyl moiety is then transferred to the epsilon-amino group of a conserved specific lysine residue in EF-P. In Vibrio cholerae serotype O1 (strain ATCC 39315 / El Tor Inaba N16961), this protein is Elongation factor P--(R)-beta-lysine ligase.